Here is a 943-residue protein sequence, read N- to C-terminus: UvrABC system protein A (943 aa).

Position 32–39 (32–39 (GLSGSGKS)) interacts with ATP. The C4-type zinc-finger motif lies at 251–278 (CPVCGFTVPELEPRLFSFNAPFGSCPTC). ABC transporter domains are found at residues 308–589 (WNPI…KKSI) and 609–937 (GSGR…QYLK). ATP is bound at residue 641 to 648 (GVSGSGKS). Residues 740 to 766 (CEACSGDGIIKIEMHFLPDVYVPCEVC) form a C4-type zinc finger.

It belongs to the ABC transporter superfamily. UvrA family. Forms a heterotetramer with UvrB during the search for lesions.

Its subcellular location is the cytoplasm. Functionally, the UvrABC repair system catalyzes the recognition and processing of DNA lesions. UvrA is an ATPase and a DNA-binding protein. A damage recognition complex composed of 2 UvrA and 2 UvrB subunits scans DNA for abnormalities. When the presence of a lesion has been verified by UvrB, the UvrA molecules dissociate. This is UvrABC system protein A from Streptococcus mutans serotype c (strain ATCC 700610 / UA159).